Here is a 257-residue protein sequence, read N- to C-terminus: tRNA pseudouridine synthase A (257 aa).

D53 (nucleophile) is an active-site residue. Y111 provides a ligand contact to substrate.

This sequence belongs to the tRNA pseudouridine synthase TruA family. As to quaternary structure, homodimer.

It catalyses the reaction uridine(38/39/40) in tRNA = pseudouridine(38/39/40) in tRNA. Formation of pseudouridine at positions 38, 39 and 40 in the anticodon stem and loop of transfer RNAs. This Xanthomonas oryzae pv. oryzae (strain MAFF 311018) protein is tRNA pseudouridine synthase A.